We begin with the raw amino-acid sequence, 176 residues long: Dual-action ribosomal maturation protein DarP (176 aa).

This sequence belongs to the DarP family.

It localises to the cytoplasm. Its function is as follows. Member of a network of 50S ribosomal subunit biogenesis factors which assembles along the 30S-50S interface, preventing incorrect 23S rRNA structures from forming. Promotes peptidyl transferase center (PTC) maturation. The sequence is that of Dual-action ribosomal maturation protein DarP from Haemophilus ducreyi (strain 35000HP / ATCC 700724).